A 344-amino-acid chain; its full sequence is UDP-galactose/UDP-glucose transporter 5B (344 aa).

8 helical membrane-spanning segments follow: residues 16–36 (LWKG…YGVL), 56–76 (LFLV…ALLA), 115–135 (VQTL…TLIM), 142–162 (FDYL…LFPA), 176–196 (TVWG…TSTF), 220–240 (CVLS…VDFV), 246–266 (CLLD…FISY), and 292–312 (CIWF…IVFG). The disordered stretch occupies residues 324-344 (KNSQTQPPPPELPQYEKVESS).

This sequence belongs to the nucleotide-sugar transporter family. UDP-galactose:UMP antiporter (TC 2.A.7.11) subfamily.

It is found in the membrane. In terms of biological role, sugar transporter involved in the transport of nucleotide-sugars from cytoplasm into the Golgi and/or the endoplasmic reticulum. In Arabidopsis thaliana (Mouse-ear cress), this protein is UDP-galactose/UDP-glucose transporter 5B.